A 40-amino-acid polypeptide reads, in one-letter code: Allophycocyanin alpha-B chain (40 aa).

The protein belongs to the phycobiliprotein family. As to quaternary structure, heterodimer of an alpha and a beta chain. In terms of processing, contains one covalently linked bilin chromophore.

It is found in the cellular thylakoid membrane. Its function is as follows. Light-harvesting photosynthetic bile pigment-protein from the phycobiliprotein complex. Allophycocyanin has a maximum absorption at approximately 650 nanometers. This Mastigocladus laminosus (Fischerella sp.) protein is Allophycocyanin alpha-B chain.